We begin with the raw amino-acid sequence, 87 residues long: Apolipoprotein C-I (87 aa).

The first 26 residues, 1–26 (MRLFLSLPVLVVVLAMVLEGPAPAQA), serve as a signal peptide directing secretion.

It belongs to the apolipoprotein C1 family.

The protein resides in the secreted. In terms of biological role, inhibitor of lipoprotein binding to the low density lipoprotein (LDL) receptor, LDL receptor-related protein, and very low density lipoprotein (VLDL) receptor. Associates with high density lipoproteins (HDL) and the triacylglycerol-rich lipoproteins in the plasma and makes up about 10% of the protein of the VLDL and 2% of that of HDL. Appears to interfere directly with fatty acid uptake and is also the major plasma inhibitor of cholesteryl ester transfer protein (CETP). Binds free fatty acids and reduces their intracellular esterification. Modulates the interaction of APOE with beta-migrating VLDL and inhibits binding of beta-VLDL to the LDL receptor-related protein. The protein is Apolipoprotein C-I (APOC1) of Zalophus californianus (California sealion).